The following is a 70-amino-acid chain: Melittin (70 aa).

An N-terminal signal peptide occupies residues 1–21; it reads MKFLVNVALVFMVVYISFIYA. Positions 22 to 43 are cleaved as a propeptide — removed by a dipeptidylpeptidase; sequence APEPEPAPEAEAEADAEADPEA. Glycine 44 bears the N-formylglycine; partial mark. Glutamine 69 bears the Glutamine amide mark.

It belongs to the melittin family. Monomer (in solution and for integration into membranes), homotetramer (in solution and potentially as a toroidal pore in membranes), and potenially homomultimer (as a toroidal pore in membranes). In terms of tissue distribution, expressed by the venom gland.

The protein localises to the secreted. It is found in the target cell membrane. Its function is as follows. Main toxin of bee venom with strong hemolytic activity and antimicrobial activity. It has enhancing effects on bee venom phospholipase A2 activity. This amphipathic toxin binds to negatively charged membrane surface and forms pore by inserting into lipid bilayers inducing the leakage of ions and molecules and the enhancement of permeability that ultimately leads to cell lysis. It acts as a voltage-gated pore with higher selectivity for anions over cations. The ion conductance has been shown to be voltage-dependent. Self-association of melittin in membranes is promoted by high ionic strength, but not by the presence of negatively charged lipids. In vivo, intradermal injection into healthy human volunteers produce sharp pain sensation and an inflammatory response. It produces pain by activating primary nociceptor cells directly and indirectly due to its ability to activate plasma membrane phospholipase A2 and its pore-forming activity. In Apis cerana cerana (Oriental honeybee), this protein is Melittin (MELT).